A 284-amino-acid chain; its full sequence is Tropomyosin alpha-1 chain (284 aa).

An N-acetylmethionine modification is found at Met1. Residues 1–38 (MDAIKKKMQMLKLDKENALDRAEQAEADKKAAEDRSKQ) are disordered. A coiled-coil region spans residues 1-284 (MDAIKKKMQM…DHALNDMTSI (284 aa)). Residues 12-38 (KLDKENALDRAEQAEADKKAAEDRSKQ) show a composition bias toward basic and acidic residues. Ser45 is subject to Phosphoserine. The tract at residues 116 to 136 (AEKAADESERGMKVIESRAQK) is disordered. Phosphoserine occurs at positions 174, 186, 206, and 252. Tyr261 is modified (phosphotyrosine). Phosphoserine occurs at positions 271 and 283.

This sequence belongs to the tropomyosin family. In terms of assembly, homodimer. Heterodimer of an alpha (TPM1, TPM3 or TPM4) and a beta (TPM2) chain. Interacts with HRG (via the HRR domain); the interaction contributes to the antiangiogenic properties of the histidine/proline-rich region (HRR) of HRG. Interacts (via N-terminus) with LMOD2 (via N-terminus) and TMOD1 (via N-terminus). Post-translationally, phosphorylated at Ser-283 by DAPK1 in response to oxidative stress and this phosphorylation enhances stress fiber formation in endothelial cells.

The protein localises to the cytoplasm. The protein resides in the cytoskeleton. Binds to actin filaments in muscle and non-muscle cells. Plays a central role, in association with the troponin complex, in the calcium dependent regulation of vertebrate striated muscle contraction. Smooth muscle contraction is regulated by interaction with caldesmon. In non-muscle cells is implicated in stabilizing cytoskeleton actin filaments. The chain is Tropomyosin alpha-1 chain (Tpm1) from Mus musculus (Mouse).